A 341-amino-acid chain; its full sequence is ATEELKEFFAKARAGSVRLIKVVIEDEQLVLGASQEPVGRWDRDYDRAVLPLLDAQQPCYLLYRLDSQNAQGFEWLFLAWSPDNSPVRLKMLYAATRATVKKEFGGGHIKDELFGTVKDDLSFAGYQKHLSSCAAPAPLTSAERELQQIRINEVKTEISVESKHQTLQGLAFPLQPEAQRALQQLKQKMVNYIQMKLDLERETIELVHTESTDVAQLPSRVPRDAARYHFFLYKHTHEGDLLESVVFIYSMPGYKCSIEERMLYSSCKSRLLDSVEQDFHLEIAKKIEIGDGAELTAEFLYDEVHPKQHAFKQAFAKPKGPGGKRGHKRLIRGPGENGDDS.

2 consecutive ADF-H domains span residues 1–131 (ATEE…KHLS) and 169–305 (GLAF…DEVH). Position 6 is an N6-acetyllysine (K6). Phosphotyrosine is present on Y301. The disordered stretch occupies residues 314–341 (AFAKPKGPGGKRGHKRLIRGPGENGDDS). Positions 322 to 331 (GGKRGHKRLI) are enriched in basic residues. Residue S341 is modified to Phosphoserine.

This sequence belongs to the actin-binding proteins ADF family. Twinfilin subfamily. As to quaternary structure, interacts with G-actin; ADP-actin form and capping protein (CP). May also be able to interact with TWF1 and phosphoinositides, PI(4,5)P2. When bound to PI(4,5)P2, it is down-regulated. Interacts with MYO7A. In terms of processing, phosphorylated on both serine and threonine residues.

The protein resides in the cytoplasm. The protein localises to the cytoskeleton. It localises to the perinuclear region. It is found in the cell projection. Its subcellular location is the stereocilium. In terms of biological role, actin-binding protein involved in motile and morphological processes. Inhibits actin polymerization, likely by sequestering G-actin. By capping the barbed ends of filaments, it also regulates motility. Seems to play an important role in clathrin-mediated endocytosis and distribution of endocytic organelles. May play a role in regulating the mature length of the middle and short rows of stereocilia. The chain is Twinfilin-2 (TWF2) from Pongo abelii (Sumatran orangutan).